Here is a 375-residue protein sequence, read N- to C-terminus: Methylthioribose-1-phosphate isomerase (375 aa).

The Proton donor role is filled by D257.

It belongs to the eIF-2B alpha/beta/delta subunits family. MtnA subfamily.

The protein resides in the cytoplasm. It localises to the nucleus. It carries out the reaction 5-(methylsulfanyl)-alpha-D-ribose 1-phosphate = 5-(methylsulfanyl)-D-ribulose 1-phosphate. The protein operates within amino-acid biosynthesis; L-methionine biosynthesis via salvage pathway; L-methionine from S-methyl-5-thio-alpha-D-ribose 1-phosphate: step 1/6. Catalyzes the interconversion of methylthioribose-1-phosphate (MTR-1-P) into methylthioribulose-1-phosphate (MTRu-1-P). This chain is Methylthioribose-1-phosphate isomerase, found in Leishmania infantum.